Reading from the N-terminus, the 611-residue chain is MPILRSATSTQGRNMAGARALWRATGMKENDFGKPIIAVVNSFTQFVPGHVHLRDMGKLVAEQIEAAGGVAKEFNTIAVDDGIAMGHGGMLYSLPSRDLIADSVEYMVNAHCADAMVCISNCDKITPGMLMAAMRLNIPAVFVSGGPMEAGKTKLSNQLIKLDLVDAMMKSADKTVCDDDVDAIEKSACPTCGSCSGMFTANSMNCLTEALGLSLPGNGSMLATHADRKELFLTAGRQIVELCKRYYEQDDASVLPRSIATKAAFENAMSLDIAMGGSTNTVLHLLAAAQEAEVDFTMADIDRLSRKVPCLSKVAPNTNKYHMEDVHRAGGIMAILGELERADLLHSDTRTVLGMTIGEQIAKYDITLTKDEAVHKFFRAGPAGIRTTKAFSQDCRWDTVDDDRQNGCIRSKEFAYSQDGGLAMLTGNIALDGCIVKTAGVDESILKFTGDAIVFESQEEAVEGILGGKVRAGHVVIIRYEGPKGGPGMQEMLYPTTYLKSIGLGKECALLTDGRFSGGTSGLSIGHCSPEAASGGTIGLVRDGDKIAIDIPNRSIQLLVSDEELAVRRAEQDAKGWKPANRQREVSMALKMFGHFATSADKGAVRDKTKL.

Asp81 serves as a coordination point for Mg(2+). Cys122 lines the [2Fe-2S] cluster pocket. The Mg(2+) site is built by Asp123 and Lys124. At Lys124 the chain carries N6-carboxylysine. Cys195 contacts [2Fe-2S] cluster. A Mg(2+)-binding site is contributed by Glu491. Ser517 functions as the Proton acceptor in the catalytic mechanism.

Belongs to the IlvD/Edd family. Homodimer. The cofactor is [2Fe-2S] cluster. Mg(2+) is required as a cofactor.

It catalyses the reaction (2R)-2,3-dihydroxy-3-methylbutanoate = 3-methyl-2-oxobutanoate + H2O. The enzyme catalyses (2R,3R)-2,3-dihydroxy-3-methylpentanoate = (S)-3-methyl-2-oxopentanoate + H2O. It functions in the pathway amino-acid biosynthesis; L-isoleucine biosynthesis; L-isoleucine from 2-oxobutanoate: step 3/4. The protein operates within amino-acid biosynthesis; L-valine biosynthesis; L-valine from pyruvate: step 3/4. Its function is as follows. Functions in the biosynthesis of branched-chain amino acids. Catalyzes the dehydration of (2R,3R)-2,3-dihydroxy-3-methylpentanoate (2,3-dihydroxy-3-methylvalerate) into 2-oxo-3-methylpentanoate (2-oxo-3-methylvalerate) and of (2R)-2,3-dihydroxy-3-methylbutanoate (2,3-dihydroxyisovalerate) into 2-oxo-3-methylbutanoate (2-oxoisovalerate), the penultimate precursor to L-isoleucine and L-valine, respectively. The protein is Dihydroxy-acid dehydratase of Actinobacillus pleuropneumoniae serotype 3 (strain JL03).